The chain runs to 530 residues: MDAQSVAPVVLVILDGWGYREAPEGNAVLAARTPVVDSLWATYPHTLLQASGRAVGLPSGQMGNSEVGHLTLGAGRVVPQELVRISDAIETGSLFHEPLLVEVCHRLKEQGGRFHFIGLCSEGGVHSHIDHLYGLLKLAAQAGIPAYVHAITDGRDTLPRDGARVLAALEKELQWLGSGVIATLSGRYYAMDRDRRWERTQKAYEILTEDGPGCGRSAAEVMEDFYAQDITDEFIPPTRLAPGAVQSGDAVIFFNFRPDRARQLTQAFVCPDFSGFQRRLIPDLTFITMTQYDPTLPVQVLFKPQNLDHLLGQVVSEAGLKQLRIAETEKYAHVTYFFNGGIEQPFPGEDRILVQSPLVATYDQMPEMSAVEVTDKAIEAIARREYSLVVLNYANPDMVGHTGNFKATVRALETVDRCLGRLLAAVVDVGGTTLIVADHGNAELMWDEQGNPWTAHTNNPVPCILVEGERRKIPGRGGDVKLRSGGTLADVGPTLLEILGLPQPPEMTGQSLLQPAEYTILQRQPAPVGR.

2 residues coordinate Mn(2+): D15 and S65. The active-site Phosphoserine intermediate is the S65. Substrate is bound by residues H126, 155-156 (RD), R187, R193, 257-260 (RPDR), and K330. Mn(2+) is bound by residues D397, H401, D438, H439, and H456.

Belongs to the BPG-independent phosphoglycerate mutase family. As to quaternary structure, monomer. Requires Mn(2+) as cofactor.

The catalysed reaction is (2R)-2-phosphoglycerate = (2R)-3-phosphoglycerate. It participates in carbohydrate degradation; glycolysis; pyruvate from D-glyceraldehyde 3-phosphate: step 3/5. Functionally, catalyzes the interconversion of 2-phosphoglycerate and 3-phosphoglycerate. The protein is 2,3-bisphosphoglycerate-independent phosphoglycerate mutase of Synechococcus sp. (strain JA-3-3Ab) (Cyanobacteria bacterium Yellowstone A-Prime).